Here is a 325-residue protein sequence, read N- to C-terminus: MSKRIYSRIAGTGSYLPEKVLTNDDMSKIVDTSDEWIRSRTGIRERHIVADDQTTSDLAYFASLKAMEAAGVTADEIDLIVVGTTTPDLIFPSTACLLQARLGNVGCGAFDVNAACSGFVYALSVADKFVRSGDAKTVLVVGAETLTRIVDWTDRTTCVLFGDGAGAVVLKADEDTGILSTHLHADGSKKELLWDPVGVSVGFGEGKNGGGALLMKGNDVFKYAVKALDSVVDETLAANGLDTHDLDWLIPHQANLRIIEATAKRLDLPMEQVVVTVDRHGNTSSASVLLALDEAVRSGRVQRGQLLLLEAFGGGFTWGSALLRY.

Active-site residues include Cys-116 and His-252. The tract at residues 253–257 (QANLR) is ACP-binding. The active site involves Asn-282.

It belongs to the thiolase-like superfamily. FabH family. In terms of assembly, homodimer.

Its subcellular location is the cytoplasm. It carries out the reaction butanoyl-CoA + malonyl-[ACP] + H(+) = 3-oxohexanoyl-[ACP] + CO2 + CoA. It catalyses the reaction hexanoyl-CoA + malonyl-[ACP] + H(+) = 3-oxooctanoyl-[ACP] + CO2 + CoA. The enzyme catalyses octanoyl-CoA + malonyl-[ACP] + H(+) = 3-oxodecanoyl-[ACP] + CO2 + CoA. The catalysed reaction is decanoyl-CoA + malonyl-[ACP] + H(+) = 3-oxododecanoyl-[ACP] + CO2 + CoA. It carries out the reaction 2-methylpropanoyl-CoA + malonyl-[ACP] + H(+) = 4-methyl-3-oxopentanoyl-[ACP] + CO2 + CoA. It catalyses the reaction 3-methylbutanoyl-CoA + malonyl-[ACP] + H(+) = 5-methyl-3-oxohexanoyl-[ACP] + CO2 + CoA. The enzyme catalyses malonyl-[ACP] + acetyl-CoA + H(+) = 3-oxobutanoyl-[ACP] + CO2 + CoA. The protein operates within lipid metabolism; fatty acid biosynthesis. Its function is as follows. Catalyzes the condensation reaction of fatty acid synthesis by the addition to an acyl acceptor of two carbons from malonyl-ACP. Catalyzes the first condensation reaction which initiates fatty acid synthesis and may therefore play a role in governing the total rate of fatty acid production. Possesses both acetoacetyl-ACP synthase and acetyl transacylase activities. Can use a wide range of acyl-CoAs as the primer substrate in vitro, with a slight preference for short, medium-straight chain acyl-CoAs. Can also use branched-chain acyl-CoAs and acetyl-CoA. The sequence is that of Beta-ketoacyl-[acyl-carrier-protein] synthase III from Xanthomonas campestris pv. campestris (strain 8004).